The following is a 933-amino-acid chain: Progesterone receptor (933 aa).

The interval 1 to 48 (MTELKAKGPRAPHVAGGPPSPEVGSPLLCRPAAGPFEGSQTSDTLPEV) is disordered. The segment at 1 to 164 (MTELKAKGPR…PATQRVLSPL (164 aa)) is AF3; mediates transcriptional activation. A modulating, Pro-Rich region spans residues 1–566 (MTELKAKGPR…YSFESLPQKI (566 aa)). A Phosphoserine modification is found at serine 20. The short motif at 55 to 59 (LDGLL) is the LXXL motif 1 element. Positions 66 to 255 (GQDLPDEKTQ…GAAAGGGAAA (190 aa)) are disordered. Residue serine 81 is modified to Phosphoserine. An LXXL motif 2 motif is present at residues 115–119 (LDTLL). Residues serine 130 and serine 162 each carry the phosphoserine modification. The mediates transcriptional transrepression stretch occupies residues 165 to 305 (MSRSGGKTGD…LATTMMDFIH (141 aa)). The Nuclear localization signal motif lies at 183 to 187 (KVLPR). Phosphoserine is present on residues serine 190 and serine 213. Position 294 is a phosphoserine; by MAPK1 (serine 294). The disordered stretch occupies residues 331–378 (GGAGAASAFAPPQSSPSASSTPVAVGDFPDCAYPPDAEPKDNAYPLYG). Residues 335 to 350 (AASAFAPPQSSPSASS) show a composition bias toward low complexity. Serine 345 is modified (phosphoserine; by MAPK). Residue lysine 388 forms a Glycyl lysine isopeptide (Lys-Gly) (interchain with G-Cter in SUMO); alternate linkage. Residue lysine 388 forms a Glycyl lysine isopeptide (Lys-Gly) (interchain with G-Cter in ubiquitin); alternate linkage. Serine 400 carries the phosphoserine; by CDK2 modification. A disordered region spans residues 415 to 454 (PDYPLGPPPQLPPRAPPSRPGEAAVTAAPASASVSSASSP). Over residues 418–433 (PLGPPPQLPPRAPPSR) the composition is skewed to pro residues. Positions 437–454 (AAVTAAPASASVSSASSP) are enriched in low complexity. The segment at 456-546 (STLECILYKA…VYPPYLNYLR (91 aa)) is AF1; mediates transcriptional activation. Lysine 531 participates in a covalent cross-link: Glycyl lysine isopeptide (Lys-Gly) (interchain with G-Cter in SUMO). 2 consecutive NR C4-type zinc fingers follow at residues 567–587 (CLIC…CGSC) and 603–627 (CAGR…LRKC). A DNA-binding region (nuclear receptor) is located at residues 567–639 (CLICGDEASG…AGMVLGGRKF (73 aa)). The residue at position 676 (serine 676) is a Phosphoserine. The NR LBD domain maps to 679-913 (QDIQLIPPLI…EFPEMMSEVI (235 aa)). Residues 687-933 (LIKLLMSIEP…MVKPLLFHKK (247 aa)) form an AF2; mediates transcriptional activation region.

Belongs to the nuclear hormone receptor family. As to quaternary structure, interacts with SMARD1 and UNC45A. Interacts with CUEDC2; the interaction promotes ubiquitination, decreases sumoylation, and represses transcriptional activity. Interacts with PIAS3; the interaction promotes sumoylation of PR in a hormone-dependent manner, inhibits DNA-binding, and alters nuclear export. Interacts with SP1; the interaction requires ligand-induced phosphorylation on Ser-345 by ERK1/2-MAPK. Interacts with PRMT2. Interacts with NCOA2 and NCOA1. Interacts with KLF9. Interacts with GTF2B. Post-translationally, phosphorylated on multiple serine sites. Several of these sites are hormone-dependent. Phosphorylation on Ser-294 is highly hormone-dependent and modulates ubiquitination and sumoylation on Lys-388. Phosphorylation on Ser-345 also requires induction by hormone. Basal phosphorylation on Ser-81, Ser-162, Ser-190 and Ser-400 is increased in response to progesterone and can be phosphorylated in vitro by the CDK2-A1 complex. Increased levels of phosphorylation on Ser-400 also in the presence of EGF, heregulin, IGF, PMA and FBS. Phosphorylation at this site by CDK2 is ligand-independent, and increases nuclear translocation and transcriptional activity. Phosphorylation at Ser-162 and Ser-294, but not at Ser-190, is impaired during the G(2)/M phase of the cell cycle. Phosphorylation on Ser-345 by ERK1/2 MAPK is required for interaction with SP1. In terms of processing, sumoylation is hormone-dependent and represses transcriptional activity. Sumoylation on all three sites is enhanced by PIAS3. Desumoylated by SENP1. Sumoylation on Lys-388, the main site of sumoylation, is repressed by ubiquitination on the same site, and modulated by phosphorylation at Ser-294. Ubiquitination is hormone-dependent and represses sumoylation on the same site. Promoted by MAPK-mediated phosphorylation on Ser-294. Post-translationally, palmitoylated by ZDHHC7 and ZDHHC21. Palmitoylation is required for plasma membrane targeting and for rapid intracellular signaling via ERK and AKT kinases and cAMP generation.

It localises to the nucleus. The protein resides in the cytoplasm. The steroid hormones and their receptors are involved in the regulation of eukaryotic gene expression and affect cellular proliferation and differentiation in target tissues. Transcriptional activator of several progesteron-dependent promoters in a variety of cell types. Involved in activation of SRC-dependent MAPK signaling on hormone stimulation. The protein is Progesterone receptor (PGR) of Trachypithecus obscurus (Dusky leaf-monkey).